An 894-amino-acid chain; its full sequence is Genome polyprotein 2 (894 aa).

The Peptidase C6 domain maps to 109-229 (TAEFKSGFCY…GCEYMLYPVG (121 aa)). Active-site for helper component proteinase activity residues include Cys117 and His189. Positions 502–539 (WVSLDSGDEDDDHSGGGGGSPQTPGGQPPASPAPGTHQ) are disordered.

This sequence belongs to the bymoviruses polyprotein 2 family. The viral RNA2 of bymoviruses is expressed as a single polyprotein which undergoes post-translational proteolytic processing resulting in the production of at least two individual proteins. The HC-pro cleaves its C-terminus autocatalytically (Potential).

It carries out the reaction Hydrolyzes a Gly-|-Gly bond at its own C-terminus, commonly in the sequence -Tyr-Xaa-Val-Gly-|-Gly, in the processing of the potyviral polyprotein.. The polypeptide is Genome polyprotein 2 (RNA2) (Hordeum vulgare (Barley)).